The chain runs to 549 residues: Glucose-6-phosphate isomerase (549 aa).

The Proton donor role is filled by Glu-355. Active-site residues include His-387 and Lys-515.

The protein belongs to the GPI family.

The protein localises to the cytoplasm. It carries out the reaction alpha-D-glucose 6-phosphate = beta-D-fructose 6-phosphate. The protein operates within carbohydrate biosynthesis; gluconeogenesis. It functions in the pathway carbohydrate degradation; glycolysis; D-glyceraldehyde 3-phosphate and glycerone phosphate from D-glucose: step 2/4. Its function is as follows. Catalyzes the reversible isomerization of glucose-6-phosphate to fructose-6-phosphate. The sequence is that of Glucose-6-phosphate isomerase from Haemophilus influenzae (strain 86-028NP).